The sequence spans 198 residues: Recombination protein RecR (198 aa).

The C4-type zinc-finger motif lies at 56 to 71 (CTECRDFSETKICAIC). Positions 79–174 (HQLCVVESPP…RPSRLAQGLP (96 aa)) constitute a Toprim domain.

This sequence belongs to the RecR family.

Functionally, may play a role in DNA repair. It seems to be involved in an RecBC-independent recombinational process of DNA repair. It may act with RecF and RecO. This chain is Recombination protein RecR, found in Xylella fastidiosa (strain 9a5c).